The primary structure comprises 335 residues: MSSTLSLKQLIGELEILESEAAKEIASAENSESIEKLRLSFLGKKGKLSLLLGGMKNLSNEERPLIGQRANVLKTQLQELIKEKLEILKTQALSQILIKETIDVTAPPTGITQGHRHPLITTTEQIIDLFLGLGYQVSEGPEIENDYYNFEALNIPPDHPARDMQDTFYLGGEYLLRTHTSPVQIRCLESKKPPVRIVSPGRVYRRDAVDATHSPVFHQVEVLAIDEKLDFSHLRGTVMAFLKAFFGDLPIRFRASYFPFTEPSAEVDVQWRGKWLEVMGCGMVDPAVLEELGIDPEKYSGFAAGLGVERFCMVRHGLDDIRKLYTSDLRFLEQF.

Glu-262 lines the Mg(2+) pocket.

This sequence belongs to the class-II aminoacyl-tRNA synthetase family. Phe-tRNA synthetase alpha subunit type 1 subfamily. In terms of assembly, tetramer of two alpha and two beta subunits. It depends on Mg(2+) as a cofactor.

It localises to the cytoplasm. It catalyses the reaction tRNA(Phe) + L-phenylalanine + ATP = L-phenylalanyl-tRNA(Phe) + AMP + diphosphate + H(+). This is Phenylalanine--tRNA ligase alpha subunit from Prochlorococcus marinus (strain NATL2A).